A 942-amino-acid chain; its full sequence is Protein NLP1 (942 aa).

Positions 1-11 (MEQKPSPPPPP) are enriched in pro residues. 5 disordered regions span residues 1 to 32 (MEQKPSPPPPPRSDEEEDGLMGCGMGGTGDIA), 77 to 106 (TTPAPAAGEDDRDEAEMPSRGGGGLEVSPA), 594 to 620 (VKENTCSSDPSNSNSDKAVEKRRTKTE), 723 to 753 (FQLEPSVPDRPCEGRFTSHTSGSNSISPSCS), and 759 to 778 (SLGCSSVPKTQQQHGSAPQL). Residues 21–32 (MGCGMGGTGDIA) are compositionally biased toward gly residues. The span at 597–609 (NTCSSDPSNSNSD) shows a compositional bias: polar residues. The 82-residue stretch at 609-690 (DKAVEKRRTK…IDSVHGPEGT (82 aa)) folds into the RWP-RK domain. Low complexity predominate over residues 743–753 (SGSNSISPSCS). Over residues 765–774 (VPKTQQQHGS) the composition is skewed to polar residues. One can recognise a PB1 domain in the interval 844-927 (SLKIKAIYGE…QTVRILVNPS (84 aa)).

It is found in the nucleus. Its function is as follows. Probable transcription factor. The sequence is that of Protein NLP1 (NLP1) from Oryza sativa subsp. japonica (Rice).